Here is a 581-residue protein sequence, read N- to C-terminus: FAD-dependent monooxygenase DEP4 (581 aa).

43–46 (VWSK) provides a ligand contact to FAD. 54–56 (FAQ) is an NADP(+) binding site. Residue Val108 coordinates FAD. NADP(+) contacts are provided by residues 183-202 (VGRS…EGKR), 219-220 (AP), and 351-352 (DI). FAD is bound at residue Met470.

It belongs to the FAD-binding monooxygenase family. It depends on FAD as a cofactor.

The protein operates within polyketide biosynthesis. FAD-dependent monooxygenase; part of the gene cluster that mediates the biosynthesis of depudecin, a highly oxidized eleven-carbon linear polyketide that acts as a histone deacetylase (HDAC) inhibitor and makes a small contribution to pathogenesis. The reducing polyketide synthase DEP5 is the central enzyme in depudecin biosynthesis by yielding the backbone polyketide chain. The monooxygenases DEP2 and DEP4, as well as the uncharacterized protein DEP1, then act as tailoring enzymes to modify the intermediate polyketide chain into depudecin. The polypeptide is FAD-dependent monooxygenase DEP4 (Alternaria brassicicola (Dark leaf spot agent)).